Reading from the N-terminus, the 514-residue chain is Maltose/maltodextrin transport system permease protein MalF (514 aa).

Topologically, residues 1–16 are cytoplasmic; it reads MDVIKKKHWWQSDQLK. The helical transmembrane segment at 17–36 threads the bilayer; it reads WSVIGLLGLLVGYLVVLMYV. The Periplasmic segment spans residues 37–39; it reads QGE. A helical transmembrane segment spans residues 40 to 57; that stretch reads YLFAIMTLILSSAGLYIF. Over 58 to 69 the chain is Cytoplasmic; the sequence is ANRKTYAWRYVY. The helical transmembrane segment at 70-92 threads the bilayer; that stretch reads PGLAGMGLFVLFPLVCTIAIAFT. The Periplasmic portion of the chain corresponds to 93–283; sequence NYSSTNQLTF…QKPFFAIFVW (191 aa). In terms of domain architecture, ABC transmembrane type-1 spans 281–505; sequence FVWTVVFSVL…LLVGALAIVN (225 aa). The helical transmembrane segment at 284–306 threads the bilayer; it reads TVVFSVLTVVLTVAVGMVLACLV. At 307-318 the chain is on the cytoplasmic side; it reads QWEALKGKAIYR. A helical transmembrane segment spans residues 319–341; sequence VLLILPYAVPSFISILIFKGLFN. Topologically, residues 342-369 are periplasmic; that stretch reads QSFGEINMMLSALFGIKPAWFSDPNTAR. A helical transmembrane segment spans residues 370 to 392; the sequence is AMVIIVNTWLGYPYMMILCMGLL. Residues 393 to 412 lie on the Cytoplasmic side of the membrane; sequence KAIPDDLYEASAMDGAGPFQ. Residues 413–435 form a helical membrane-spanning segment; the sequence is NFFKITLPLLIKPLTPLMIASFA. At 436 to 483 the chain is on the periplasmic side; the sequence is FNFNNFVLIQLLTNGGPDRLGTTTPAGYTDLLVSYTYRIAFEGGGGQD. The helical transmembrane segment at 484 to 506 threads the bilayer; sequence FGLAAAIATLIFLLVGALAIVNL. Topologically, residues 507 to 514 are cytoplasmic; it reads KATRMKFD.

The protein belongs to the binding-protein-dependent transport system permease family. MalFG subfamily. In terms of assembly, the complex is composed of two ATP-binding proteins (MalK), two transmembrane proteins (MalG and MalF) and a solute-binding protein (MalE).

It localises to the cell inner membrane. In terms of biological role, part of the ABC transporter complex MalEFGK involved in maltose/maltodextrin import. Probably responsible for the translocation of the substrate across the membrane. In Salmonella typhi, this protein is Maltose/maltodextrin transport system permease protein MalF (malF).